The sequence spans 587 residues: Arginine--tRNA ligase (587 aa).

The short motif at 127 to 137 (PNLAKEMHVGH) is the 'HIGH' region element.

The protein belongs to the class-I aminoacyl-tRNA synthetase family. In terms of assembly, monomer.

It is found in the cytoplasm. It catalyses the reaction tRNA(Arg) + L-arginine + ATP = L-arginyl-tRNA(Arg) + AMP + diphosphate. In Pseudomonas aeruginosa (strain UCBPP-PA14), this protein is Arginine--tRNA ligase.